Consider the following 613-residue polypeptide: Proton myo-inositol cotransporter hmit-1.2 (613 aa).

Topologically, residues 1-21 (MVAVEFKVSESGRPRPEKNPK) are cytoplasmic. A helical membrane pass occupies residues 22-42 (LGFFVYLLGSAAIIGGFLFGY). At 43 to 69 (DTSVVSAAMLYVPEAPGLKPMGTVWKE) the chain is on the extracellular side. The chain crosses the membrane as a helical span at residues 70–90 (VIVSITPGMAAVGAWFSGAGS). Residues 91–96 (DRYGRK) lie on the Cytoplasmic side of the membrane. The helical transmembrane segment at 97–117 (PIIIGSTLIFVCGAVICAVAW) threads the bilayer. The Extracellular portion of the chain corresponds to 118–119 (TK). A helical membrane pass occupies residues 120–140 (IVMLIGRIFLGVGIGFASMVV). The Cytoplasmic segment spans residues 141 to 157 (PVYLGEASPTHVRGTLV). Residues 158-178 (SAFAMMISFGQVVANIMGGVF) form a helical membrane-spanning segment. The Extracellular segment spans residues 179-189 (SYWEPYTIGWR). Residues 190-210 (LMFAFAGIPALIQFVCFIFLP) traverse the membrane as a helical segment. Topologically, residues 211–279 (ETPRWLYENG…RILKTPHVLK (69 aa)) are cytoplasmic. Residues 280–300 (ACFIGSMLQAFQQLAGINTIL) traverse the membrane as a helical segment. Residues 301-317 (YYTADIIRSAGIENYHT) are Extracellular-facing. A helical membrane pass occupies residues 318 to 338 (IIWISVILSICNLIGPFAPMF). Residues 339 to 347 (FIEKLGRRK) lie on the Cytoplasmic side of the membrane. A helical transmembrane segment spans residues 348–368 (LFLFSCAGVVVSLVLIGVSFL). Over 369–472 (LVGNDSAPNF…QKHHCTTSYT (104 aa)) the chain is Extracellular. Residues Asn372, Asn451, and Asn456 are each glycosylated (N-linked (GlcNAc...) asparagine). A helical membrane pass occupies residues 473–493 (ILPIVMMGVYLLTFSCGFTSL). The Cytoplasmic segment spans residues 494 to 515 (PWVLNSEFYPMWARSTCVSIST). The helical transmembrane segment at 516 to 536 (LSNWVFNLIIALTYLSLTHAI) threads the bilayer. The Extracellular segment spans residues 537–539 (TKY). A helical transmembrane segment spans residues 540–560 (GAFWLYAIFTIIAFIFIYFLV). At 561–613 (PETTGYSIDEVEMLFMNKRQRNIAMQARQAKLDAASDKDKNSSTSLSTETITM) the chain is on the cytoplasmic side. The disordered stretch occupies residues 594–613 (AASDKDKNSSTSLSTETITM). Over residues 602-613 (SSTSLSTETITM) the composition is skewed to polar residues.

Belongs to the major facilitator superfamily. Sugar transporter (TC 2.A.1.1) family. As to expression, expressed in the excretory canal cell and in pairs of amphid and sheath glia.

The protein localises to the cell membrane. It is found in the perikaryon. It carries out the reaction myo-inositol(out) + H(+)(out) = myo-inositol(in) + H(+)(in). Its function is as follows. H(+)-myo-inositol cotransporter. Probably by promoting the transport of myo-inositol regulates intracellular osmosis in response to hyperosmotic stress. This is Proton myo-inositol cotransporter hmit-1.2 from Caenorhabditis elegans.